We begin with the raw amino-acid sequence, 287 residues long: ADP-dependent (S)-NAD(P)H-hydrate dehydratase (287 aa).

The YjeF C-terminal domain maps to 7–283 (GEDDVRKFVP…ELLPSVMKPF (277 aa)). Residues Ala42 and His159 each coordinate (6S)-NADPHX. AMP contacts are provided by residues 196 to 200 (KGPTD) and Gly224. A (6S)-NADPHX-binding site is contributed by Asp225.

It belongs to the NnrD/CARKD family. In terms of assembly, homotetramer. Mg(2+) serves as cofactor.

The catalysed reaction is (6S)-NADHX + ADP = AMP + phosphate + NADH + H(+). It catalyses the reaction (6S)-NADPHX + ADP = AMP + phosphate + NADPH + H(+). Functionally, catalyzes the dehydration of the S-form of NAD(P)HX at the expense of ADP, which is converted to AMP. Together with NAD(P)HX epimerase, which catalyzes the epimerization of the S- and R-forms, the enzyme allows the repair of both epimers of NAD(P)HX, a damaged form of NAD(P)H that is a result of enzymatic or heat-dependent hydration. This chain is ADP-dependent (S)-NAD(P)H-hydrate dehydratase, found in Cenarchaeum symbiosum (strain A).